Consider the following 238-residue polypeptide: Ureidoacrylate amidohydrolase RutB (238 aa).

The active-site Proton acceptor is the Asp-35. Lys-144 is a catalytic residue. Cys-177 acts as the Nucleophile in catalysis.

The protein belongs to the isochorismatase family. RutB subfamily.

It catalyses the reaction (Z)-3-ureidoacrylate + H2O + H(+) = (Z)-3-aminoacrylate + NH4(+) + CO2. The enzyme catalyses (Z)-3-ureidoacrylate + H2O = (Z)-3-aminoacrylate + carbamate + H(+). The catalysed reaction is (Z)-2-methylureidoacrylate + H2O + H(+) = (Z)-2-methylaminoacrylate + NH4(+) + CO2. In terms of biological role, hydrolyzes ureidoacrylate to form aminoacrylate and carbamate. The carbamate hydrolyzes spontaneously, thereby releasing one of the nitrogen atoms of the pyrimidine ring as ammonia and one of its carbon atoms as CO2. In Caulobacter vibrioides (strain NA1000 / CB15N) (Caulobacter crescentus), this protein is Ureidoacrylate amidohydrolase RutB.